The following is a 1826-amino-acid chain: Transcription initiation factor TFIID subunit 1-like (1826 aa).

3 disordered regions span residues 118–141, 532–555, and 1252–1276; these read DESQRHQQTMGSLQPLYHSDYDED, IPDEKEEATSNSPSKESKKESSLK, and RLKRNQEKEKLKGPPEKKPKKMKER. Positions 1252 to 1268 are enriched in basic and acidic residues; the sequence is RLKRNQEKEKLKGPPEK. The short motif at 1370 to 1377 is the Nuclear localization signal element; it reads PPKKKRRV. Bromo domains lie at 1395 to 1503 and 1517 to 1626; these read RRRT…LKEK and LLDD…ITEY. Residues 1648 to 1826 form a disordered region; it reads AELESLDPMT…SGEHKDGHGK (179 aa). Positions 1660 to 1700 are enriched in polar residues; it reads PYTSQPPDMYDTNTSLSTSRDASVFQDESNLSVLDISTATP. Composition is skewed to acidic residues over residues 1714–1729, 1740–1750, and 1768–1783; these read EDSDVDVEGYDDEEED, GDGDLADEEEG, and EGEDDEEDAGSDEEGD. Residues 1787–1797 show a composition bias toward polar residues; that stretch reads SAIQLSESGSD. Over residues 1817–1826 the composition is skewed to basic and acidic residues; sequence SGEHKDGHGK.

Belongs to the TAF1 family. Can bind directly to TATA-box binding protein (TBP). Interacts (via bromo domains) with acetylated lysine residues on the N-terminus of histone H1.4, H2A, H2B, H3 and H4 (in vitro). Testis specific, expressed apparently in germ cells.

Its subcellular location is the nucleus. In terms of biological role, may act as a functional substitute for TAF1/TAFII250 during male meiosis, when sex chromosomes are transcriptionally silenced. The chain is Transcription initiation factor TFIID subunit 1-like (TAF1L) from Homo sapiens (Human).